Consider the following 453-residue polypeptide: Indoleamine 2,3-dioxygenase (453 aa).

Residue histidine 331 participates in heme binding.

It belongs to the indoleamine 2,3-dioxygenase family. Heme serves as cofactor.

The enzyme catalyses D-tryptophan + O2 = N-formyl-D-kynurenine. It catalyses the reaction L-tryptophan + O2 = N-formyl-L-kynurenine. It participates in cofactor biosynthesis; NAD(+) biosynthesis. Functionally, catalyzes the first step in tryptophan catabolism in order to supply de novo nicotinamide adenine dinucleotide (NAD(+)) via the kynurenine pathway. Plays a role in the cellular response to telomere uncapping. The sequence is that of Indoleamine 2,3-dioxygenase (BNA2) from Saccharomyces cerevisiae (strain ATCC 204508 / S288c) (Baker's yeast).